Reading from the N-terminus, the 591-residue chain is Aspartate--tRNA(Asp/Asn) ligase (591 aa).

Residue glutamate 176 participates in L-aspartate binding. The tract at residues 200-203 (QLFK) is aspartate. Arginine 222 is an L-aspartate binding site. ATP contacts are provided by residues 222–224 (RDE) and glutamine 231. Histidine 450 is an L-aspartate binding site. Residue glutamate 484 participates in ATP binding. Arginine 491 is an L-aspartate binding site. Position 536 to 539 (536 to 539 (GLDR)) interacts with ATP.

The protein belongs to the class-II aminoacyl-tRNA synthetase family. Type 1 subfamily. In terms of assembly, homodimer.

It localises to the cytoplasm. It catalyses the reaction tRNA(Asx) + L-aspartate + ATP = L-aspartyl-tRNA(Asx) + AMP + diphosphate. Functionally, aspartyl-tRNA synthetase with relaxed tRNA specificity since it is able to aspartylate not only its cognate tRNA(Asp) but also tRNA(Asn). Reaction proceeds in two steps: L-aspartate is first activated by ATP to form Asp-AMP and then transferred to the acceptor end of tRNA(Asp/Asn). The sequence is that of Aspartate--tRNA(Asp/Asn) ligase from Bacillus anthracis (strain CDC 684 / NRRL 3495).